A 300-amino-acid chain; its full sequence is Protein phosphatase 2C 1 (300 aa).

One can recognise a PPM-type phosphatase domain in the interval isoleucine 23 to leucine 298. Positions 57, 58, 237, and 289 each coordinate Mn(2+).

Belongs to the PP2C family. Mg(2+) serves as cofactor. The cofactor is Mn(2+). Post-translationally, the N-terminus is blocked.

The protein resides in the membrane. The enzyme catalyses O-phospho-L-seryl-[protein] + H2O = L-seryl-[protein] + phosphate. The catalysed reaction is O-phospho-L-threonyl-[protein] + H2O = L-threonyl-[protein] + phosphate. Its function is as follows. Serine and threonine phosphatase. This is Protein phosphatase 2C 1 from Paramecium tetraurelia.